Here is a 679-residue protein sequence, read N- to C-terminus: tRNA uridine 5-carboxymethylaminomethyl modification enzyme MnmG (679 aa).

Residue 15–20 participates in FAD binding; sequence GAGHAG. 314-328 is an NAD(+) binding site; the sequence is GPRYCPSIEDKIVRF.

It belongs to the MnmG family. As to quaternary structure, homodimer. Heterotetramer of two MnmE and two MnmG subunits. The cofactor is FAD.

It localises to the cytoplasm. NAD-binding protein involved in the addition of a carboxymethylaminomethyl (cmnm) group at the wobble position (U34) of certain tRNAs, forming tRNA-cmnm(5)s(2)U34. The sequence is that of tRNA uridine 5-carboxymethylaminomethyl modification enzyme MnmG from Roseiflexus sp. (strain RS-1).